The chain runs to 91 residues: Cell division topological specificity factor (91 aa).

Belongs to the MinE family.

In terms of biological role, prevents the cell division inhibition by proteins MinC and MinD at internal division sites while permitting inhibition at polar sites. This ensures cell division at the proper site by restricting the formation of a division septum at the midpoint of the long axis of the cell. The sequence is that of Cell division topological specificity factor from Desulfitobacterium hafniense (strain DSM 10664 / DCB-2).